A 295-amino-acid chain; its full sequence is MNRLKSDQKTKLRQFVQWTQVTEAVSLNFLAKANWNIEYAMTLYFDNPNLFAGSTPQPSVDRSNIERLFNQYVDPKDKVGEKRMGPHGINRLLTDLGYEATDRRVLVLAWKFTAQTQCEFSLDEWVKGMTALQADTVQNLRQRIDSINSGLESDKAKFHELYLFAFNYAKSAACRNLDLETAICCWDVLFGQRSTIMTQWIDFLWAQENAAASRLAQNVGASNAKQFKSVWISRDTWNLFWDFILLSKPDLSDYDDEGAWPVLIDQFVDYCRENLNYPKPGNASNDQQMETPSYY.

Residues 8 to 45 form the UBA-like domain; it reads QKTKLRQFVQWTQVTEAVSLNFLAKANWNIEYAMTLYF. Residues 60 to 272 form the DCUN1 domain; sequence VDRSNIERLF…LIDQFVDYCR (213 aa).

As to quaternary structure, interacts with the cullin cul-3. Interacts with ubiquitin via its UBA-like domain. Interacts with ned-8/nedd8.

The protein resides in the nucleus. Its function is as follows. Required for neddylation of cullin components of SCF-type E3 ubiquitin ligase complexes. Neddylation of cullins play an essential role in the regulation of SCF-type complexes activity. Does not act by preventing deneddylation, but rather facilitates neddylation, possibly by acting with rbx-1 to recruit the Nedd8-charged E2 enzyme to the cullin component of SCF-type complexes. This Caenorhabditis elegans protein is Defective in cullin neddylation protein 1 (dcn-1).